A 210-amino-acid polypeptide reads, in one-letter code: Frataxin, mitochondrial (210 aa).

Residues methionine 1–glycine 41 constitute a mitochondrion transit peptide.

It belongs to the frataxin family. As to quaternary structure, component of the mitochondrial core iron-sulfur cluster (ISC) complex composed of NFS1, LYRM4, NDUFAB1, ISCU, FXN, and FDX2; this complex is a heterohexamer containing two copies of each monomer. Homodimer. Monomer (probable predominant form). Oligomer. Monomers and polymeric aggregates of &gt;1 MDa have been isolated from mitochondria. A small fraction of heterologous overexpressed recombinant frataxin forms high-molecular weight aggregates that incorporate iron. Interacts with LYRM4. Interacts (via ferrous form) with ISCU; the interaction is possible when both are bound to the dimeric form of the cysteine desulfurase complex (NFS1:LYRM4) and the interaction enhances FXN interaction to the dimeric form of the cysteine desulfurase complex (NFS1:LYRM4). Interacts with FECH; one iron-bound FXN monomer seems to interact with a FECH homodimer. Interacts with SDHA and SDHB. Interacts with ACO2; the interaction is dependent on citrate. Interacts with HSPA9. Interacts with ACO1. Interacts with ISCU (cytoplasmic form). Post-translationally, processed in two steps by mitochondrial processing peptidase (MPP). MPP first cleaves the precursor to intermediate form and subsequently converts the intermediate to yield frataxin mature form (frataxin(81-210)) which is the predominant form. The additional forms, frataxin(56-210) and frataxin(78-210), seem to be produced when the normal maturation process is impaired; their physiological relevance is unsure.

It is found in the mitochondrion. It localises to the cytoplasm. The protein resides in the cytosol. It carries out the reaction 4 Fe(2+) + O2 + 4 H(+) = 4 Fe(3+) + 2 H2O. In terms of biological role, functions as an activator of persulfide transfer to the scaffoding protein ISCU as component of the core iron-sulfur cluster (ISC) assembly complex and participates to the [2Fe-2S] cluster assembly. Accelerates sulfur transfer from NFS1 persulfide intermediate to ISCU and to small thiols such as L-cysteine and glutathione leading to persulfuration of these thiols and ultimately sulfide release. Binds ferrous ion and is released from FXN upon the addition of both L-cysteine and reduced FDX2 during [2Fe-2S] cluster assembly. The core iron-sulfur cluster (ISC) assembly complex is involved in the de novo synthesis of a [2Fe-2S] cluster, the first step of the mitochondrial iron-sulfur protein biogenesis. This process is initiated by the cysteine desulfurase complex (NFS1:LYRM4:NDUFAB1) that produces persulfide which is delivered on the scaffold protein ISCU in a FXN-dependent manner. Then this complex is stabilized by FDX2 which provides reducing equivalents to accomplish the [2Fe-2S] cluster assembly. Finally, the [2Fe-2S] cluster is transferred from ISCU to chaperone proteins, including HSCB, HSPA9 and GLRX5. May play a role in the protection against iron-catalyzed oxidative stress through its ability to catalyze the oxidation of Fe(2+) to Fe(3+); the oligomeric form but not the monomeric form has in vitro ferroxidase activity. May be able to store large amounts of iron in the form of a ferrihydrite mineral by oligomerization; however, the physiological relevance is unsure as reports are conflicting and the function has only been shown using heterologous overexpression systems. May function as an iron chaperone protein that protects the aconitase [4Fe-4S]2+ cluster from disassembly and promotes enzyme reactivation. May play a role as a high affinity iron binding partner for FECH that is capable of both delivering iron to ferrochelatase and mediating the terminal step in mitochondrial heme biosynthesis. Modulates the RNA-binding activity of ACO1. May be involved in the cytoplasmic iron-sulfur protein biogenesis. May contribute to oxidative stress resistance and overall cell survival. This is Frataxin, mitochondrial from Macaca fascicularis (Crab-eating macaque).